The primary structure comprises 122 residues: MSDNLSQADILARVAATLESRKPENGGDPEKSYVAKLFKKGDDAILKKIGEEATETVMAAKDARAADLADEAVSKVVYEVADLWFHTMVLLARIGRTPEDVVNELARREGLSGLVEKASRKE.

This sequence belongs to the PRA-PH family.

The protein resides in the cytoplasm. It carries out the reaction 1-(5-phospho-beta-D-ribosyl)-ATP + H2O = 1-(5-phospho-beta-D-ribosyl)-5'-AMP + diphosphate + H(+). Its pathway is amino-acid biosynthesis; L-histidine biosynthesis; L-histidine from 5-phospho-alpha-D-ribose 1-diphosphate: step 2/9. This Cupriavidus metallidurans (strain ATCC 43123 / DSM 2839 / NBRC 102507 / CH34) (Ralstonia metallidurans) protein is Phosphoribosyl-ATP pyrophosphatase.